The chain runs to 277 residues: 3-methyl-2-oxobutanoate hydroxymethyltransferase (277 aa).

2 residues coordinate Mg(2+): Asp53 and Asp96. 3-methyl-2-oxobutanoate contacts are provided by residues Asp53–Ser54, Asp96, and Lys126. Glu128 contributes to the Mg(2+) binding site. Glu195 serves as the catalytic Proton acceptor.

The protein belongs to the PanB family. Homodecamer; pentamer of dimers. The cofactor is Mg(2+).

It localises to the cytoplasm. It catalyses the reaction 3-methyl-2-oxobutanoate + (6R)-5,10-methylene-5,6,7,8-tetrahydrofolate + H2O = 2-dehydropantoate + (6S)-5,6,7,8-tetrahydrofolate. It functions in the pathway cofactor biosynthesis; (R)-pantothenate biosynthesis; (R)-pantoate from 3-methyl-2-oxobutanoate: step 1/2. Functionally, catalyzes the reversible reaction in which hydroxymethyl group from 5,10-methylenetetrahydrofolate is transferred onto alpha-ketoisovalerate to form ketopantoate. The sequence is that of 3-methyl-2-oxobutanoate hydroxymethyltransferase from Chlorobium phaeobacteroides (strain BS1).